Consider the following 62-residue polypeptide: Potassium channel toxin alpha-KTx 18.3 (62 aa).

The N-terminal stretch at 1-26 is a signal peptide; it reads MHFSGVAFILISMVLIGSIFETTVEA. Cystine bridges form between Cys-34/Cys-53, Cys-39/Cys-58, and Cys-43/Cys-60.

Belongs to the short scorpion toxin superfamily. Potassium channel inhibitor family. Alpha-KTx 18 subfamily. Expressed by the venom gland.

The protein localises to the secreted. In terms of biological role, probable voltage-gated potassium channel inhibitor. In Tityus discrepans (Venezuelan scorpion), this protein is Potassium channel toxin alpha-KTx 18.3.